The chain runs to 354 residues: Isopentenyl-diphosphate delta-isomerase (354 aa).

Position 11–12 (11–12 (KK)) interacts with substrate. FMN is bound by residues serine 67, 68 to 70 (SMT), serine 98, and asparagine 126. 98 to 100 (SFK) is a binding site for substrate. Glutamine 160 lines the substrate pocket. Residue glutamate 161 coordinates Mg(2+). FMN contacts are provided by residues lysine 192, threonine 222, and 289-290 (AA).

It belongs to the IPP isomerase type 2 family. Homooctamer. Dimer of tetramers. Requires FMN as cofactor. NADPH serves as cofactor. It depends on Mg(2+) as a cofactor.

The protein resides in the cytoplasm. It catalyses the reaction isopentenyl diphosphate = dimethylallyl diphosphate. In terms of biological role, involved in the biosynthesis of isoprenoids. Catalyzes the 1,3-allylic rearrangement of the homoallylic substrate isopentenyl (IPP) to its allylic isomer, dimethylallyl diphosphate (DMAPP). The protein is Isopentenyl-diphosphate delta-isomerase of Borreliella afzelii (strain PKo) (Borrelia afzelii).